The following is a 694-amino-acid chain: Acetyl-coenzyme A synthetase (694 aa).

Residues 1–23 are disordered; sequence MSDKRPRSPCSNNNDELNDSSVL. Residues 9 to 23 are compositionally biased toward polar residues; the sequence is PCSNNNDELNDSSVL. CoA-binding positions include 229–232 and Thr-347; that span reads RGKK. ATP-binding positions include 423-425, 447-452, Asp-536, and Arg-551; these read GEP and DTYWQT. Position 559 (Ser-559) interacts with CoA. Arg-562 is an ATP binding site. Arg-628 is a binding site for CoA.

It belongs to the ATP-dependent AMP-binding enzyme family.

It catalyses the reaction acetate + ATP + CoA = acetyl-CoA + AMP + diphosphate. This chain is Acetyl-coenzyme A synthetase (ACS), found in Cryptosporidium parvum.